Here is a 706-residue protein sequence, read N- to C-terminus: G2/M phase-specific E3 ubiquitin-protein ligase (706 aa).

The segment at 11–51 adopts a C2HC pre-PHD-type zinc-finger fold; sequence NLACVFCRKNDDCPNKYGEKKTKEKWNLTVHYYCLLMSSGI. The PHD-type 1 zinc-finger motif lies at 79–128; sequence LKCCVCKKNGASIGCVAPRCKRSYHFPCGLQRECIFQFTGNFASFCWNHR. A PHD-type 2; degenerate zinc finger spans residues 143–193; the sequence is PCTICLEFIEPIPSYNILRSPCCKNAWFHRDCLQVQAINAGVFFFRCTICS. The segment at 237–286 adopts a PHD-type 3 zinc-finger fold; it reads RCRCKEGRDYNAPDSKWEIKRCQCCGSSGTHLACSSLRSWEQNWECLECR. The HECT domain occupies 371–698; sequence IWTSALDAFR…IRNTLKLEKE (328 aa).

It is found in the nucleus. The protein resides in the nucleolus. It localises to the cytoplasm. It carries out the reaction S-ubiquitinyl-[E2 ubiquitin-conjugating enzyme]-L-cysteine + [acceptor protein]-L-lysine = [E2 ubiquitin-conjugating enzyme]-L-cysteine + N(6)-ubiquitinyl-[acceptor protein]-L-lysine.. Its pathway is protein modification; protein ubiquitination. In terms of biological role, E3 ubiquitin-protein ligase which accepts ubiquitin from an E2 ubiquitin-conjugating enzyme in the form of a thioester and then directly transfers the ubiquitin to targeted substrates. Essential in early embryonic development to prevent apoptotic death. The polypeptide is G2/M phase-specific E3 ubiquitin-protein ligase (G2E3) (Macaca fascicularis (Crab-eating macaque)).